The chain runs to 476 residues: Serine/threonine-protein kinase PBL36 (476 aa).

In terms of domain architecture, Protein kinase spans 126-412; the sequence is FRPESLLGEG…VEALKPLPNL (287 aa). ATP contacts are provided by residues 132-140 and Lys-164; that span reads LGEGGFGCV. Tyr-209 is subject to Phosphotyrosine. The active-site Proton acceptor is Asp-259. Residues Ser-263 and Ser-293 each carry the phosphoserine modification. Residues Thr-294 and Thr-299 each carry the phosphothreonine modification. Phosphotyrosine is present on Tyr-307. The disordered stretch occupies residues 431-476; sequence NGVRTQGGGFVSRNGPPMRSLSSLNLPQASPYRYARQSPKPKGKEP.

This sequence belongs to the protein kinase superfamily. Ser/Thr protein kinase family. As to quaternary structure, interacts with SD129. In terms of processing, phosphorylated by SD129 in response to the pathogen-associated molecular pattern (PAMP) 3-OH-C10:0, a medium-chain 3-hydroxy fatty acid.

It is found in the cell membrane. It carries out the reaction L-seryl-[protein] + ATP = O-phospho-L-seryl-[protein] + ADP + H(+). The enzyme catalyses L-threonyl-[protein] + ATP = O-phospho-L-threonyl-[protein] + ADP + H(+). Involved in chitin-triggered immune signaling and is required for reactive oxygen species (ROS) production. Acts downstream of SD129 in defense signaling triggered by the pathogen-associated molecular pattern (PAMP) 3-OH-C10:0, a medium-chain 3-hydroxy fatty acid. The chain is Serine/threonine-protein kinase PBL36 from Arabidopsis thaliana (Mouse-ear cress).